Here is a 1290-residue protein sequence, read N- to C-terminus: 1-phosphatidylinositol 4,5-bisphosphate phosphodiesterase gamma-1 (1290 aa).

Ala-2 carries the post-translational modification N-acetylalanine. One can recognise a PH 1 domain in the interval 27 to 142; sequence RSLEVGTVMT…WIKGLTWLME (116 aa). In terms of domain architecture, EF-hand spans 152-187; it reads QIERWLRKQFYSVDRNREDRISAKDLKNMLSQVNYR. 5 residues coordinate Ca(2+): Asp-165, Asn-167, Glu-169, Arg-171, and Asp-176. Residues 320 to 464 enclose the PI-PLC X-box domain; the sequence is DTMNNPLSHY…LKRKILIKHK (145 aa). Catalysis depends on residues His-335 and His-380. The PH 2; first part domain occupies 489 to 523; sequence SIKNGILYLEDPVNHEWYPHYFVLTSSKIYYSEET. Tyr-506 carries the phosphotyrosine modification. The segment at 522 to 544 is disordered; that stretch reads ETSSDQGNEDEEEPKEVSSSTEL. SH2 domains follow at residues 550 to 657 and 668 to 756; these read WFHG…SEPV and WYHA…RYPI. Phosphotyrosine; by SYK is present on Tyr-771. Tyr-775 is subject to Phosphotyrosine. Residue Tyr-783 is modified to Phosphotyrosine; by ITK, SYK and TXK. Positions 791–851 constitute an SH3 domain; the sequence is TFKCAVKALF…PSNYVEEMVN (61 aa). Residues 895–931 enclose the PH 2; second part domain; that stretch reads FVFSISMASVAHWSLDVAADSQEELQDWVKKIREVAQ. The 118-residue stretch at 953–1070 folds into the PI-PLC Y-box domain; that stretch reads LSELVVYCRP…GYVLQPSTMR (118 aa). At Tyr-977 the chain carries Phosphotyrosine. The C2 domain maps to 1071-1194; it reads DEAFDPFDKS…TGYRAVPLKN (124 aa). Residues Ser-1221, Pro-1222, Ser-1227, Ser-1233, and Ser-1248 each carry the phosphoserine modification. Tyr-1253 is subject to Phosphotyrosine. Ser-1263 carries the phosphoserine modification. The tract at residues 1271–1290 is disordered; sequence FDSRERRAPRRTRVNGDNRL.

As to quaternary structure, interacts with AGAP2 via its SH3 domain. Interacts (via SH2 domain) with RET. Interacts with FLT1 (tyrosine-phosphorylated). Interacts (via SH2 domain) with FGFR1, FGFR2, FGFR3 and FGFR4 (phosphorylated). Interacts with LAT (phosphorylated) upon TCR activation. Interacts (via SH3 domain) with the Pro-rich domain of TNK1. Associates with BLNK, VAV1, GRB2 and NCK1 in a B-cell antigen receptor-dependent fashion. Interacts with CBLB in activated T-cells; which inhibits phosphorylation. Interacts with SHB. Interacts (via SH3 domain) with the Arg/Gly-rich-flanked Pro-rich domains of KHDRBS1/SAM68. This interaction is selectively regulated by arginine methylation of KHDRBS1/SAM68. Interacts with INPP5D/SHIP1, THEMIS and CLNK. Interacts with AXL, FLT4 and KIT. Interacts with RALGPS1. Interacts (via the SH2 domains) with VIL1 (phosphorylated at C-terminus tyrosine phosphorylation sites). Interacts (via SH2 domain) with PDGFRA and PDGFRB (tyrosine phosphorylated). Interacts with PIP5K1C. Interacts with NTRK1 and NTRK2 (phosphorylated upon ligand-binding). Interacts with SYK; activates PLCG1. Interacts with GRB2, LAT and THEMIS upon TCR activation in thymocytes. Interacts with TESPA1; the association is increased with prolonged stimulation of the TCR and may facilitate the assembly of the LAT signalosome. Interacts (via C-terminal proline-rich domain (PRD)) with PLCG1 (via SH3 domain); this interaction leads to guanine nucleotide exchange from PlCG1 to DNM1 and enhances DNM1-dependent endocytosis. (Microbial infection) Interacts (via SH3 domain) with HEV ORF3 protein. Ca(2+) serves as cofactor. Tyrosine phosphorylated in response to signaling via activated FLT3, KIT and PDGFRA. Tyrosine phosphorylated by activated FGFR1, FGFR2, FGFR3 and FGFR4. Tyrosine phosphorylated by activated FLT1 and KDR. Tyrosine phosphorylated by activated PDGFRB. The receptor-mediated activation of PLCG1 involves its phosphorylation by tyrosine kinases, in response to ligation of a variety of growth factor receptors and immune system receptors. For instance, SYK phosphorylates and activates PLCG1 in response to ligation of the B-cell receptor. May be dephosphorylated by PTPRJ. Phosphorylated by ITK and TXK on Tyr-783 upon TCR activation in T-cells. Post-translationally, ubiquitinated by CBLB in activated T-cells.

It localises to the cell projection. The protein resides in the lamellipodium. The protein localises to the ruffle. It carries out the reaction a 1,2-diacyl-sn-glycero-3-phospho-(1D-myo-inositol-4,5-bisphosphate) + H2O = 1D-myo-inositol 1,4,5-trisphosphate + a 1,2-diacyl-sn-glycerol + H(+). The enzyme catalyses a 1,2-diacyl-sn-glycero-3-phospho-(1D-myo-inositol) + H2O = 1D-myo-inositol 1-phosphate + a 1,2-diacyl-sn-glycerol + H(+). With respect to regulation, activated by phosphorylation on tyrosine residues. Mediates the production of the second messenger molecules diacylglycerol (DAG) and inositol 1,4,5-trisphosphate (IP3). Plays an important role in the regulation of intracellular signaling cascades. Becomes activated in response to ligand-mediated activation of receptor-type tyrosine kinases, such as PDGFRA, PDGFRB, EGFR, FGFR1, FGFR2, FGFR3 and FGFR4. Plays a role in actin reorganization and cell migration. Guanine nucleotide exchange factor that binds the GTPase DNM1 and catalyzes the dissociation of GDP, allowing a GTP molecule to bind in its place, therefore enhancing DNM1-dependent endocytosis. The chain is 1-phosphatidylinositol 4,5-bisphosphate phosphodiesterase gamma-1 from Homo sapiens (Human).